The following is a 347-amino-acid chain: NADH-ubiquinone oxidoreductase chain 2 (347 aa).

A run of 10 helical transmembrane segments spans residues 3–23 (PLIF…TMIS), 26–46 (WLLI…IIMM), 67–87 (SMLL…WTIM), 96–116 (YMMT…FWVP), 149–169 (LNLN…GWGG), 178–198 (IMAY…MYNT), 200–220 (LMML…ALFI), 239–259 (ILTT…PLSG), 274–294 (NMLL…YFYM), and 325–345 (LSPT…MMLI).

This sequence belongs to the complex I subunit 2 family. Core subunit of respiratory chain NADH dehydrogenase (Complex I) which is composed of 45 different subunits. Interacts with TMEM242.

It is found in the mitochondrion inner membrane. The catalysed reaction is a ubiquinone + NADH + 5 H(+)(in) = a ubiquinol + NAD(+) + 4 H(+)(out). Functionally, core subunit of the mitochondrial membrane respiratory chain NADH dehydrogenase (Complex I) which catalyzes electron transfer from NADH through the respiratory chain, using ubiquinone as an electron acceptor. Essential for the catalytic activity and assembly of complex I. This chain is NADH-ubiquinone oxidoreductase chain 2, found in Dasypus novemcinctus (Nine-banded armadillo).